The primary structure comprises 337 residues: Anthranilate phosphoribosyltransferase (337 aa).

5-phospho-alpha-D-ribose 1-diphosphate is bound by residues G81, 84 to 85 (GD), S89, 91 to 94 (NVST), 109 to 117 (KHGNRAATS), and A121. G81 lines the anthranilate pocket. Position 93 (S93) interacts with Mg(2+). N112 serves as a coordination point for anthranilate. R167 contributes to the anthranilate binding site. Mg(2+)-binding residues include D226 and E227.

The protein belongs to the anthranilate phosphoribosyltransferase family. As to quaternary structure, homodimer. Mg(2+) is required as a cofactor.

It carries out the reaction N-(5-phospho-beta-D-ribosyl)anthranilate + diphosphate = 5-phospho-alpha-D-ribose 1-diphosphate + anthranilate. It functions in the pathway amino-acid biosynthesis; L-tryptophan biosynthesis; L-tryptophan from chorismate: step 2/5. Functionally, catalyzes the transfer of the phosphoribosyl group of 5-phosphorylribose-1-pyrophosphate (PRPP) to anthranilate to yield N-(5'-phosphoribosyl)-anthranilate (PRA). The sequence is that of Anthranilate phosphoribosyltransferase from Methylorubrum extorquens (strain PA1) (Methylobacterium extorquens).